Reading from the N-terminus, the 852-residue chain is Lon protease homolog 2, peroxisomal (852 aa).

At Ser-2 the chain carries N-acetylserine. The Lon N-terminal domain occupies 13–222 (LPLLLTHEGV…MTIPLLVRQI (210 aa)). 375 to 382 (GPPGVGKT) provides a ligand contact to ATP. A Lon proteolytic domain is found at 651-837 (LSQPGVAIGL…DEVLNAAFDG (187 aa)). Active-site residues include Ser-743 and Lys-786. Positions 850 to 852 (SKL) match the Microbody targeting signal motif.

Belongs to the peptidase S16 family. As to quaternary structure, interacts with PEX5. Interacts with TYSND1. May interact with enzymes involved in beta-oxidation of fatty acids, including ACOX1/AOX.

Its subcellular location is the peroxisome matrix. It carries out the reaction Hydrolysis of proteins in presence of ATP.. In terms of biological role, ATP-dependent serine protease that mediates the selective degradation of misfolded and unassembled polypeptides in the peroxisomal matrix. Necessary for type 2 peroxisome targeting signal (PTS2)-containing protein processing and facilitates peroxisome matrix protein import. May indirectly regulate peroxisomal fatty acid beta-oxidation through degradation of the self-processed forms of TYSND1. The polypeptide is Lon protease homolog 2, peroxisomal (Pongo abelii (Sumatran orangutan)).